Consider the following 192-residue polypeptide: Crossover junction endodeoxyribonuclease RuvC (192 aa).

Active-site residues include aspartate 8, glutamate 67, and aspartate 139. The Mg(2+) site is built by aspartate 8, glutamate 67, and aspartate 139.

This sequence belongs to the RuvC family. In terms of assembly, homodimer which binds Holliday junction (HJ) DNA. The HJ becomes 2-fold symmetrical on binding to RuvC with unstacked arms; it has a different conformation from HJ DNA in complex with RuvA. In the full resolvosome a probable DNA-RuvA(4)-RuvB(12)-RuvC(2) complex forms which resolves the HJ. Mg(2+) is required as a cofactor.

It localises to the cytoplasm. The enzyme catalyses Endonucleolytic cleavage at a junction such as a reciprocal single-stranded crossover between two homologous DNA duplexes (Holliday junction).. Its function is as follows. The RuvA-RuvB-RuvC complex processes Holliday junction (HJ) DNA during genetic recombination and DNA repair. Endonuclease that resolves HJ intermediates. Cleaves cruciform DNA by making single-stranded nicks across the HJ at symmetrical positions within the homologous arms, yielding a 5'-phosphate and a 3'-hydroxyl group; requires a central core of homology in the junction. The consensus cleavage sequence is 5'-(A/T)TT(C/G)-3'. Cleavage occurs on the 3'-side of the TT dinucleotide at the point of strand exchange. HJ branch migration catalyzed by RuvA-RuvB allows RuvC to scan DNA until it finds its consensus sequence, where it cleaves and resolves the cruciform DNA. The polypeptide is Crossover junction endodeoxyribonuclease RuvC (Actinobacillus pleuropneumoniae serotype 5b (strain L20)).